The primary structure comprises 800 residues: Phenylalanine--tRNA ligase beta subunit (800 aa).

The 116-residue stretch at 39-154 folds into the tRNA-binding domain; that stretch reads TKDIKKLVVG…EAVKPGTDAL (116 aa). A B5 domain is found at 408–483; sequence SFVTPIEITA…RIYGYDEIPS (76 aa). Mg(2+) is bound by residues Asp461, Asp467, Glu470, and Glu471. The region spanning 708 to 800 is the FDX-ACB domain; it reads PRFPGVTRDI…ALKKHGAIIR (93 aa).

Belongs to the phenylalanyl-tRNA synthetase beta subunit family. Type 1 subfamily. In terms of assembly, tetramer of two alpha and two beta subunits. Mg(2+) is required as a cofactor.

The protein resides in the cytoplasm. The catalysed reaction is tRNA(Phe) + L-phenylalanine + ATP = L-phenylalanyl-tRNA(Phe) + AMP + diphosphate + H(+). This is Phenylalanine--tRNA ligase beta subunit from Staphylococcus epidermidis (strain ATCC 12228 / FDA PCI 1200).